Here is a 242-residue protein sequence, read N- to C-terminus: Phosphoribosyl isomerase A (242 aa).

The Proton acceptor role is filled by Asp12. Asp131 serves as the catalytic Proton donor.

It belongs to the HisA/HisF family.

Its subcellular location is the cytoplasm. The enzyme catalyses 1-(5-phospho-beta-D-ribosyl)-5-[(5-phospho-beta-D-ribosylamino)methylideneamino]imidazole-4-carboxamide = 5-[(5-phospho-1-deoxy-D-ribulos-1-ylimino)methylamino]-1-(5-phospho-beta-D-ribosyl)imidazole-4-carboxamide. It catalyses the reaction N-(5-phospho-beta-D-ribosyl)anthranilate = 1-(2-carboxyphenylamino)-1-deoxy-D-ribulose 5-phosphate. The protein operates within amino-acid biosynthesis; L-histidine biosynthesis; L-histidine from 5-phospho-alpha-D-ribose 1-diphosphate: step 4/9. It participates in amino-acid biosynthesis; L-tryptophan biosynthesis; L-tryptophan from chorismate: step 3/5. Involved in both the histidine and tryptophan biosynthetic pathways. In Streptomyces avermitilis (strain ATCC 31267 / DSM 46492 / JCM 5070 / NBRC 14893 / NCIMB 12804 / NRRL 8165 / MA-4680), this protein is Phosphoribosyl isomerase A.